Here is an 857-residue protein sequence, read N- to C-terminus: Phosphoenolpyruvate carboxylase (857 aa).

Active-site residues include His-144 and Lys-530.

The protein belongs to the PEPCase type 1 family. In terms of assembly, homotetramer. It depends on Mg(2+) as a cofactor. The N-terminus is blocked.

It catalyses the reaction oxaloacetate + phosphate = phosphoenolpyruvate + hydrogencarbonate. Forms oxaloacetate, a four-carbon dicarboxylic acid source for the tricarboxylic acid cycle. The protein is Phosphoenolpyruvate carboxylase (ppc) of Thermus sp. (strain 71).